The primary structure comprises 141 residues: HTH-type transcriptional repressor NsrR (141 aa).

One can recognise an HTH rrf2-type domain in the interval 2-129 (QLTSFTDYGL…DNYTLADLVE (128 aa)). The H-T-H motif DNA-binding region spans 28–51 (ISEVTDVYGVSRNHMVKIINQLSR). Residues Cys91, Cys96, and Cys102 each coordinate [2Fe-2S] cluster.

[2Fe-2S] cluster serves as cofactor.

Its function is as follows. Nitric oxide-sensitive repressor of genes involved in protecting the cell against nitrosative stress. May require iron for activity. In Escherichia coli O139:H28 (strain E24377A / ETEC), this protein is HTH-type transcriptional repressor NsrR.